The sequence spans 276 residues: NADPH-dependent 7-cyano-7-deazaguanine reductase (276 aa).

80 to 82 serves as a coordination point for substrate; the sequence is VES. 82–83 is a binding site for NADPH; that stretch reads SK. The active-site Thioimide intermediate is the Cys-183. The active-site Proton donor is Asp-190. 222 to 223 is a binding site for substrate; it reads HE. An NADPH-binding site is contributed by 251–252; sequence RG.

Belongs to the GTP cyclohydrolase I family. QueF type 2 subfamily. In terms of assembly, homodimer.

The protein resides in the cytoplasm. The enzyme catalyses 7-aminomethyl-7-carbaguanine + 2 NADP(+) = 7-cyano-7-deazaguanine + 2 NADPH + 3 H(+). The protein operates within tRNA modification; tRNA-queuosine biosynthesis. In terms of biological role, catalyzes the NADPH-dependent reduction of 7-cyano-7-deazaguanine (preQ0) to 7-aminomethyl-7-deazaguanine (preQ1). The chain is NADPH-dependent 7-cyano-7-deazaguanine reductase from Burkholderia cenocepacia (strain HI2424).